A 360-amino-acid polypeptide reads, in one-letter code: Probable protein phosphatase 2C 54 (360 aa).

A disordered region spans residues 1–39; sequence MCVEESEGAERLDFGEPAAAAADAGKSKSKSPDELPSPR. The PPM-type phosphatase domain occupies 65 to 325; the sequence is RSGDWSDIGG…DNLTAVLVSF (261 aa). 4 residues coordinate Mn(2+): Asp109, Gly110, Asp273, and Asp316.

The protein belongs to the PP2C family. It depends on Mg(2+) as a cofactor. Mn(2+) is required as a cofactor.

It catalyses the reaction O-phospho-L-seryl-[protein] + H2O = L-seryl-[protein] + phosphate. It carries out the reaction O-phospho-L-threonyl-[protein] + H2O = L-threonyl-[protein] + phosphate. This chain is Probable protein phosphatase 2C 54, found in Oryza sativa subsp. japonica (Rice).